A 356-amino-acid chain; its full sequence is Photosystem II protein D1 (356 aa).

3 consecutive transmembrane segments (helical) span residues 29-46 (YVGWFGTLMIPTLLTATT), 118-133 (HFLIGIFCYMGRQWEL), and 142-156 (WICVAYSAPVSAATA). His-118 lines the chlorophyll a pocket. Pheophytin a is bound at residue Tyr-126. Residues Asp-170 and Glu-189 each coordinate [CaMn4O5] cluster. A helical membrane pass occupies residues 197–218 (FHMLGVAGVFGGSLFSAMHGSL). Residue His-198 participates in chlorophyll a binding. A quinone contacts are provided by residues His-215 and 264–265 (SF). His-215 is a Fe cation binding site. Position 272 (His-272) interacts with Fe cation. A helical transmembrane segment spans residues 274–288 (FLGAWPVIGIWFTAM). Residues His-332, Glu-333, Asp-342, and Ala-344 each contribute to the [CaMn4O5] cluster site. A propeptide spanning residues 345 to 356 (SAEPVSAPVING) is cleaved from the precursor.

Belongs to the reaction center PufL/M/PsbA/D family. In terms of assembly, PSII is composed of 1 copy each of membrane proteins PsbA, PsbB, PsbC, PsbD, PsbE, PsbF, PsbH, PsbI, PsbJ, PsbK, PsbL, PsbM, PsbT, PsbX, PsbY, PsbZ, Psb30/Ycf12, peripheral proteins PsbO, CyanoQ (PsbQ), PsbU, PsbV and a large number of cofactors. It forms dimeric complexes. Requires The D1/D2 heterodimer binds P680, chlorophylls that are the primary electron donor of PSII, and subsequent electron acceptors. It shares a non-heme iron and each subunit binds pheophytin, quinone, additional chlorophylls, carotenoids and lipids. D1 provides most of the ligands for the Mn4-Ca-O5 cluster of the oxygen-evolving complex (OEC). There is also a Cl(-1) ion associated with D1 and D2, which is required for oxygen evolution. The PSII complex binds additional chlorophylls, carotenoids and specific lipids. as cofactor. Tyr-161 forms a radical intermediate that is referred to as redox-active TyrZ, YZ or Y-Z. In terms of processing, C-terminally processed by CtpA; processing is essential to allow assembly of the oxygen-evolving complex and thus photosynthetic growth.

It is found in the cellular thylakoid membrane. The enzyme catalyses 2 a plastoquinone + 4 hnu + 2 H2O = 2 a plastoquinol + O2. Its function is as follows. Photosystem II (PSII) is a light-driven water:plastoquinone oxidoreductase that uses light energy to abstract electrons from H(2)O, generating O(2) and a proton gradient subsequently used for ATP formation. It consists of a core antenna complex that captures photons, and an electron transfer chain that converts photonic excitation into a charge separation. The D1/D2 (PsbA/PsbD) reaction center heterodimer binds P680, the primary electron donor of PSII as well as several subsequent electron acceptors. This Crocosphaera subtropica (strain ATCC 51142 / BH68) (Cyanothece sp. (strain ATCC 51142)) protein is Photosystem II protein D1.